We begin with the raw amino-acid sequence, 280 residues long: Adenosylcobinamide-GDP ribazoletransferase (280 aa).

6 consecutive transmembrane segments (helical) span residues 44-64 (GVGVLVGALVAAFTALLLFVL), 69-89 (STPLVAAALGTALGVLLTGAF), 111-131 (LVIMKDSRVGAFGAIAVMLAL), 135-155 (VALLALLGAVSATLMVAALFV), 189-209 (ISVAALLTGFIWCFMALALVI), and 226-246 (ALLQALLSAVVASCVAWAVMA).

This sequence belongs to the CobS family. It depends on Mg(2+) as a cofactor.

Its subcellular location is the cell inner membrane. It carries out the reaction alpha-ribazole + adenosylcob(III)inamide-GDP = adenosylcob(III)alamin + GMP + H(+). It catalyses the reaction alpha-ribazole 5'-phosphate + adenosylcob(III)inamide-GDP = adenosylcob(III)alamin 5'-phosphate + GMP + H(+). The protein operates within cofactor biosynthesis; adenosylcobalamin biosynthesis; adenosylcobalamin from cob(II)yrinate a,c-diamide: step 7/7. In terms of biological role, joins adenosylcobinamide-GDP and alpha-ribazole to generate adenosylcobalamin (Ado-cobalamin). Also synthesizes adenosylcobalamin 5'-phosphate from adenosylcobinamide-GDP and alpha-ribazole 5'-phosphate. This Albidiferax ferrireducens (strain ATCC BAA-621 / DSM 15236 / T118) (Rhodoferax ferrireducens) protein is Adenosylcobinamide-GDP ribazoletransferase.